The primary structure comprises 429 residues: BURP domain-containing protein 3 (429 aa).

A signal peptide spans 1 to 21; sequence MDRLLACLLGFLLIASVGSHA. Residues 59–81 form a disordered region; the sequence is GGGVHVDAGHGKPGGTTVDVGKG. Residues 213–428 form the BURP domain; sequence FFLEKDLHPG…PQDHVVWTRS (216 aa).

Expressed in stems, leaves, shoot, panicles and stamen.

In Oryza sativa subsp. japonica (Rice), this protein is BURP domain-containing protein 3 (BURP3).